A 131-amino-acid polypeptide reads, in one-letter code: Small ribosomal subunit protein uS8 (131 aa).

This sequence belongs to the universal ribosomal protein uS8 family. Part of the 30S ribosomal subunit. Contacts proteins S5 and S12.

One of the primary rRNA binding proteins, it binds directly to 16S rRNA central domain where it helps coordinate assembly of the platform of the 30S subunit. The chain is Small ribosomal subunit protein uS8 from Legionella pneumophila (strain Paris).